Consider the following 255-residue polypeptide: 5'-nucleotidase SurE (255 aa).

The a divalent metal cation site is built by Asp8, Asp9, Ser40, and Asn93.

The protein belongs to the SurE nucleotidase family. It depends on a divalent metal cation as a cofactor.

The protein resides in the cytoplasm. It carries out the reaction a ribonucleoside 5'-phosphate + H2O = a ribonucleoside + phosphate. Its function is as follows. Nucleotidase that shows phosphatase activity on nucleoside 5'-monophosphates. The polypeptide is 5'-nucleotidase SurE (Bradyrhizobium sp. (strain BTAi1 / ATCC BAA-1182)).